Here is a 1191-residue protein sequence, read N- to C-terminus: Homeodomain-interacting protein kinase 3 (1191 aa).

A Glycyl lysine isopeptide (Lys-Gly) (interchain with G-Cter in SUMO2) cross-link involves residue lysine 27. The Protein kinase domain maps to 197–525; the sequence is YEVLDFLGRG…PIETLNHPFV (329 aa). Residues 203–211 and lysine 226 contribute to the ATP site; that span reads LGRGTFGQV. Aspartate 322 serves as the catalytic Proton acceptor. The residue at position 359 (tyrosine 359) is a Phosphotyrosine. Positions 766 to 920 are interaction with AR; the sequence is QNRSNSLQNT…NSMSDDEQES (155 aa). Residues 774-867 form an interaction with FAS region; sequence NTNVPHSAFI…SPRPSLRECK (94 aa). The interval 801–828 is disordered; sequence TQDNHTSEGEARTCHEASVRQDSSVSDK. A compositionally biased stretch (basic and acidic residues) spans 802–828; that stretch reads QDNHTSEGEARTCHEASVRQDSSVSDK. The tract at residues 846–856 is interaction with UBL1; that stretch reads ITISSDTDDEE. A compositionally biased stretch (low complexity) spans 888–905; it reads SSPDSTLSTSSSGQSSPS. Disordered regions lie at residues 888 to 960 and 993 to 1022; these read SSPD…TCAG and TCQP…KPTS. Residues 1008 to 1022 are compositionally biased toward polar residues; it reads NQPSASAARQQKPTS.

The protein belongs to the protein kinase superfamily. CMGC Ser/Thr protein kinase family. HIPK subfamily. As to quaternary structure, interacts with Nkx1-2. Interacts with FAS and DAXX. Probably part of a complex consisting of HIPK3, FAS and FADD. Interacts with UBL1/SUMO-1. Interacts with and stabilizes ligand-bound androgen receptor (AR). Autophosphorylated. Autophosphorylation is not required for catalytic activity. In terms of processing, may be sumoylated.

It is found in the nucleus. It catalyses the reaction L-seryl-[protein] + ATP = O-phospho-L-seryl-[protein] + ADP + H(+). The enzyme catalyses L-threonyl-[protein] + ATP = O-phospho-L-threonyl-[protein] + ADP + H(+). Functionally, seems to negatively regulate apoptosis by promoting FADD phosphorylation. Enhances androgen receptor-mediated transcription. May act as a transcriptional corepressor for NK homeodomain transcription factors. The chain is Homeodomain-interacting protein kinase 3 (Hipk3) from Rattus norvegicus (Rat).